We begin with the raw amino-acid sequence, 143 residues long: MRRVYTNRRAHHEYELLERFEAGISLTGSEVKSVRAGGVDFRDAFARINGSDVDLEGLYIPVYKEATYNNHEPRRKRRLLLHREEIEKLRRGLEQKGLTLVPTRLYQKGRYFKVELALARGKKLHDKRRADAERTVARELREL.

It belongs to the SmpB family.

The protein localises to the cytoplasm. Functionally, required for rescue of stalled ribosomes mediated by trans-translation. Binds to transfer-messenger RNA (tmRNA), required for stable association of tmRNA with ribosomes. tmRNA and SmpB together mimic tRNA shape, replacing the anticodon stem-loop with SmpB. tmRNA is encoded by the ssrA gene; the 2 termini fold to resemble tRNA(Ala) and it encodes a 'tag peptide', a short internal open reading frame. During trans-translation Ala-aminoacylated tmRNA acts like a tRNA, entering the A-site of stalled ribosomes, displacing the stalled mRNA. The ribosome then switches to translate the ORF on the tmRNA; the nascent peptide is terminated with the 'tag peptide' encoded by the tmRNA and targeted for degradation. The ribosome is freed to recommence translation, which seems to be the essential function of trans-translation. The protein is SsrA-binding protein of Deinococcus radiodurans (strain ATCC 13939 / DSM 20539 / JCM 16871 / CCUG 27074 / LMG 4051 / NBRC 15346 / NCIMB 9279 / VKM B-1422 / R1).